A 578-amino-acid chain; its full sequence is Probable cytochrome c oxidase subunit 1-alpha (578 aa).

Positions 1 to 21 are disordered; sequence MSILNEPQGASAAEDSYENEL. A helical membrane pass occupies residues 44–64; that stretch reads IGTMYLVTSFAFFVIGGVMAL. H90 contributes to the Fe(II)-heme a binding site. The next 6 membrane-spanning stretches (helical) occupy residues 93-113, 125-145, 174-194, 217-237, 262-282, and 294-314; these read IMLL…IMPL, LNMF…GGFL, LWIM…VNFI, VLLT…ALFA, LFWF…FGIV, and IFGY…SVTV. Cu cation contacts are provided by H268 and Y272. Positions 268–272 form a cross-link, 1'-histidyl-3'-tyrosine (His-Tyr); it reads HPEVY. Residues H317 and H318 each coordinate Cu cation. Transmembrane regions (helical) follow at residues 319 to 339 and 363 to 383; these read MYVT…LIAV and MLWS…GVIL. A heme a3-binding site is contributed by H401. A run of 3 helical transmembrane segments spans residues 402-422, 437-457, and 480-500; these read FHYV…HFWW, ITFW…HWLG, and ISTI…YNIW. H403 serves as a coordination point for Fe(II)-heme a.

Belongs to the heme-copper respiratory oxidase family. In terms of assembly, associates with subunits II, III and IV to form cytochrome c oxidase. The cofactor is Cu(2+). Requires heme as cofactor.

The protein resides in the cell membrane. The enzyme catalyses 4 Fe(II)-[cytochrome c] + O2 + 8 H(+)(in) = 4 Fe(III)-[cytochrome c] + 2 H2O + 4 H(+)(out). It functions in the pathway energy metabolism; oxidative phosphorylation. Cytochrome c oxidase is the component of the respiratory chain that catalyzes the reduction of oxygen to water. Subunits 1-3 form the functional core of the enzyme complex. CO I is the catalytic subunit of the enzyme. Electrons originating in cytochrome c are transferred via the copper A center of subunit 2 and heme A of subunit 1 to the bimetallic center formed by heme A3 and copper B. The sequence is that of Probable cytochrome c oxidase subunit 1-alpha (ctaD1) from Streptomyces coelicolor (strain ATCC BAA-471 / A3(2) / M145).